The primary structure comprises 91 residues: Small ribosomal subunit protein uS19 (91 aa).

This sequence belongs to the universal ribosomal protein uS19 family.

In terms of biological role, protein S19 forms a complex with S13 that binds strongly to the 16S ribosomal RNA. This Synechococcus sp. (strain CC9605) protein is Small ribosomal subunit protein uS19.